Reading from the N-terminus, the 344-residue chain is Phenylalanine--tRNA ligase alpha subunit (344 aa).

Mg(2+) is bound at residue Glu-258.

It belongs to the class-II aminoacyl-tRNA synthetase family. Phe-tRNA synthetase alpha subunit type 1 subfamily. In terms of assembly, tetramer of two alpha and two beta subunits. The cofactor is Mg(2+).

It localises to the cytoplasm. The enzyme catalyses tRNA(Phe) + L-phenylalanine + ATP = L-phenylalanyl-tRNA(Phe) + AMP + diphosphate + H(+). In Thiobacillus denitrificans (strain ATCC 25259 / T1), this protein is Phenylalanine--tRNA ligase alpha subunit.